The sequence spans 314 residues: tRNA pseudouridine synthase B (314 aa).

The Nucleophile role is filled by Asp-47.

Belongs to the pseudouridine synthase TruB family. Type 1 subfamily.

The catalysed reaction is uridine(55) in tRNA = pseudouridine(55) in tRNA. Functionally, responsible for synthesis of pseudouridine from uracil-55 in the psi GC loop of transfer RNAs. This chain is tRNA pseudouridine synthase B, found in Vibrio campbellii (strain ATCC BAA-1116).